The primary structure comprises 291 residues: Tumor necrosis factor ligand superfamily member 10 (291 aa).

Over 1-17 (MPSSGALKDLSFSQHFR) the chain is Cytoplasmic. A helical; Signal-anchor for type II membrane protein transmembrane segment spans residues 18–38 (MMVICIVLLQVLLQAVSVAVT). Residues 39 to 291 (YMYFTNEMKQ…ASFFGAFLIN (253 aa)) are Extracellular-facing. Asparagine 52 is a glycosylation site (N-linked (GlcNAc...) asparagine). In terms of domain architecture, THD spans 126–290 (VAAHITGITR…EASFFGAFLI (165 aa)). A Zn(2+)-binding site is contributed by cysteine 240.

This sequence belongs to the tumor necrosis factor family. In terms of assembly, homotrimer. One TNFSF10 homotrimer interacts with three TNFSF10A mononers. One TNFSF10 homotrimer interacts with three TNFSF10B mononers. In terms of processing, tyrosine phosphorylated by PKDCC/VLK. Widespread.

It localises to the cell membrane. The protein localises to the secreted. In terms of biological role, cytokine that binds to TNFRSF10A/TRAILR1, TNFRSF10B/TRAILR2, TNFRSF10C/TRAILR3, TNFRSF10D/TRAILR4 and possibly also to TNFRSF11B/OPG. Induces apoptosis. Its activity may be modulated by binding to the decoy receptors TNFRSF10C/TRAILR3, TNFRSF10D/TRAILR4 and TNFRSF11B/OPG that cannot induce apoptosis. In Mus musculus (Mouse), this protein is Tumor necrosis factor ligand superfamily member 10 (Tnfsf10).